Consider the following 418-residue polypeptide: AP-3 complex subunit mu-2 (418 aa).

The region spanning 176–417 (NNEAYFDVVE…MTKAGKFQVR (242 aa)) is the MHD domain.

Belongs to the adaptor complexes medium subunit family. In terms of assembly, adaptor protein complex 3 (AP-3) is a heterotetramer composed of two large adaptins (delta-type subunit AP3D1 and beta-type subunit AP3B1 or AP3B2), a medium adaptin (mu-type subunit AP3M1 or AP3M2) and a small adaptin (sigma-type subunit APS1 or AP3S2). AP-3 associates with the BLOC-1 complex.

The protein resides in the golgi apparatus. It localises to the cytoplasmic vesicle membrane. Component of the adaptor complexes which link clathrin to receptors in coated vesicles. Clathrin-associated protein complexes are believed to interact with the cytoplasmic tails of membrane proteins, leading to their selection and concentration. Ap47 is a subunit of the plasma membrane adaptor. In concert with the BLOC-1 complex, AP-3 is required to target cargos into vesicles assembled at cell bodies for delivery into neurites and nerve terminals. The chain is AP-3 complex subunit mu-2 (Ap3m2) from Rattus norvegicus (Rat).